The primary structure comprises 185 residues: Threonylcarbamoyl-AMP synthase (185 aa).

A YrdC-like domain is found at 4–185 (DWRVQQVARV…LRSGEVIRPA (182 aa)).

It belongs to the SUA5 family. TsaC subfamily.

The protein resides in the cytoplasm. It carries out the reaction L-threonine + hydrogencarbonate + ATP = L-threonylcarbamoyladenylate + diphosphate + H2O. Its function is as follows. Required for the formation of a threonylcarbamoyl group on adenosine at position 37 (t(6)A37) in tRNAs that read codons beginning with adenine. Catalyzes the conversion of L-threonine, HCO(3)(-)/CO(2) and ATP to give threonylcarbamoyl-AMP (TC-AMP) as the acyladenylate intermediate, with the release of diphosphate. The protein is Threonylcarbamoyl-AMP synthase of Stutzerimonas stutzeri (strain A1501) (Pseudomonas stutzeri).